The sequence spans 363 residues: Carbamoyl phosphate synthase small chain (363 aa).

Residues 1 to 173 (MMKAFLVLDN…SKYIFGTHTG (173 aa)) are CPSase. Residues S46, G225, and G227 each coordinate L-glutamine. The region spanning 177-363 (KLAVYDYGVK…YDLVEKTKKG (187 aa)) is the Glutamine amidotransferase type-1 domain. The Nucleophile role is filled by C253. L-glutamine-binding residues include L254, Q257, N295, G297, and F298. Residues H336 and E338 contribute to the active site.

The protein belongs to the CarA family. Composed of two chains; the small (or glutamine) chain promotes the hydrolysis of glutamine to ammonia, which is used by the large (or ammonia) chain to synthesize carbamoyl phosphate. Tetramer of heterodimers (alpha,beta)4.

The enzyme catalyses hydrogencarbonate + L-glutamine + 2 ATP + H2O = carbamoyl phosphate + L-glutamate + 2 ADP + phosphate + 2 H(+). It carries out the reaction L-glutamine + H2O = L-glutamate + NH4(+). It participates in amino-acid biosynthesis; L-arginine biosynthesis; carbamoyl phosphate from bicarbonate: step 1/1. It functions in the pathway pyrimidine metabolism; UMP biosynthesis via de novo pathway; (S)-dihydroorotate from bicarbonate: step 1/3. In terms of biological role, small subunit of the glutamine-dependent carbamoyl phosphate synthetase (CPSase). CPSase catalyzes the formation of carbamoyl phosphate from the ammonia moiety of glutamine, carbonate, and phosphate donated by ATP, constituting the first step of 2 biosynthetic pathways, one leading to arginine and/or urea and the other to pyrimidine nucleotides. The small subunit (glutamine amidotransferase) binds and cleaves glutamine to supply the large subunit with the substrate ammonia. The polypeptide is Carbamoyl phosphate synthase small chain (Leptospira interrogans serogroup Icterohaemorrhagiae serovar copenhageni (strain Fiocruz L1-130)).